A 67-amino-acid chain; its full sequence is uncharacterized protein (67 aa).

This is an uncharacterized protein from Saccharolobus islandicus (Sulfolobus islandicus).